The sequence spans 382 residues: Protein NASP homolog 1 (382 aa).

Residues 1 to 39 (MDTENIADASDIRVKDASGDSDEKGNGTTTEEETVEQKE) form a disordered region. The span at 10 to 25 (SDIRVKDASGDSDEKG) shows a compositional bias: basic and acidic residues. The stretch at 42 to 75 (LAELLAAGRRALKVNDIDKASDSLSEATELSSEI) is one TPR 1 repeat. The segment covering 103–112 (QLLKGPGEKE) has biased composition (basic and acidic residues). The interval 103–151 (QLLKGPGEKESGDEEQAGNSDDKTDEENGETEKEDGEESGEEEDDDDDT) is disordered. Over residues 125 to 150 (KTDEENGETEKEDGEESGEEEDDDDD) the composition is skewed to acidic residues. TPR repeat units lie at residues 191–224 (ADVL…QRNV) and 233–266 (AQTY…LIAR). Residues 264-304 (IARQTELKHELERGVDDKEKKSEFENELKELEEMMPGVEEM) adopt a coiled-coil conformation. Residues 337-382 (PQEAGDQKEANDISSLVRRPAKRAVDAPTDNQAVKKEKEEEGTTSI) form a disordered region. The span at 369–382 (AVKKEKEEEGTTSI) shows a compositional bias: basic and acidic residues.

This sequence belongs to the NASP family. May interact with zinc finger protein tra-4 and histone deacetylase hda-1.

The protein resides in the nucleus. Promotes normal hermaphrodite (XX) development, in concert with zinc finger protein tra-4 and histone deacetylase hda-1, perhaps as components of a complex. May act redundantly with nasp-2. Involved in innate immune response to B.thuringiensis strain DB27 and S.aureus bacteria. May play a role in the uptake or spreading of dsRNA. This is Protein NASP homolog 1 from Caenorhabditis elegans.